The sequence spans 236 residues: tRNA1(Val) (adenine(37)-N6)-methyltransferase (236 aa).

It belongs to the methyltransferase superfamily. tRNA (adenine-N(6)-)-methyltransferase family.

Its subcellular location is the cytoplasm. The enzyme catalyses adenosine(37) in tRNA1(Val) + S-adenosyl-L-methionine = N(6)-methyladenosine(37) in tRNA1(Val) + S-adenosyl-L-homocysteine + H(+). Its function is as follows. Specifically methylates the adenine in position 37 of tRNA(1)(Val) (anticodon cmo5UAC). This Histophilus somni (strain 129Pt) (Haemophilus somnus) protein is tRNA1(Val) (adenine(37)-N6)-methyltransferase.